The sequence spans 538 residues: MWSGRSSFTSLVVGVFVVYVVHTCWVMYGIVYTRPCSGHGRCIQPYLAQRPKLQLSVYTTTRSNLGSENNVDLVLNVEDFDVESKFERTVNVSVPKKTRNNGTLYAYVFLHHAGVLPWNDAKQVHLVSPLTTYMVPRPEEVSLLAGGPAAQQIEAEKRPTSALDEPVSHWRPRLTLNVMVDNFVFDGASLPADVQRYMKMIQLGKTVQYLPILFIDQLSNRVKDLMVINRSSTELPLTVSYDKISLGRLRFWIHMQDAVYSLQQFGFSEKDADEVKGIFVDTNLYFLALTFFVAAFHLLFDFLAFKNDISFWKKKKSMIGMSTKAVLWRCFSTVVIFLFLLDEQTSLPVLVPAGIGAAIELWKVKKALKMTVIWRGLWPTFQFGTYSESERRTEEYDAQAMKYLSYLLYPLCIGGAIYSLLNIKYKSWYSWLINSFVNGVYAFGFLFMLPQLFVNYKMKSVAHLPWKAFTYKAFNTFIDDVFAFIITMPTSHRLACFRDDVVFLVYLYQRWLYPVDKSRVNEFGESYEDTPQRKPHTD.

The Cytoplasmic segment spans residues 1–10 (MWSGRSSFTS). A helical membrane pass occupies residues 11–31 (LVVGVFVVYVVHTCWVMYGIV). Residues 32–284 (YTRPCSGHGR…VKGIFVDTNL (253 aa)) are Extracellular-facing. 2 N-linked (GlcNAc...) asparagine glycosylation sites follow: Asn-91 and Asn-101. A helical transmembrane segment spans residues 285-305 (YFLALTFFVAAFHLLFDFLAF). The Cytoplasmic segment spans residues 306-324 (KNDISFWKKKKSMIGMSTK). A helical membrane pass occupies residues 325-341 (AVLWRCFSTVVIFLFLL). Topologically, residues 342 to 402 (DEQTSLPVLV…TEEYDAQAMK (61 aa)) are extracellular. The chain crosses the membrane as a helical span at residues 403–423 (YLSYLLYPLCIGGAIYSLLNI). The Cytoplasmic portion of the chain corresponds to 424–428 (KYKSW). Residues 429–449 (YSWLINSFVNGVYAFGFLFML) traverse the membrane as a helical segment. Residues 450 to 538 (PQLFVNYKMK…DTPQRKPHTD (89 aa)) lie on the Extracellular side of the membrane.

It belongs to the CLPTM1 family.

It localises to the endoplasmic reticulum membrane. The enzyme catalyses a 6-(alpha-D-glucosaminyl)-1-(1,2-diacyl-sn-glycero-3-phospho)-1D-myo-inositol(in) = a 6-(alpha-D-glucosaminyl)-1-(1,2-diacyl-sn-glycero-3-phospho)-1D-myo-inositol(out). The catalysed reaction is 6-(alpha-D-glucosaminyl)-(1-octadecanoyl,2-(9Z)-octadecenoyl-sn-glycero-3-phospho)-1D-myo-inositol(in) = 6-(alpha-D-glucosaminyl)-(1-octadecanoyl,2-(9Z)-octadecenoyl-sn-glycero-3-phospho)-1D-myo-inositol(out). It carries out the reaction a 1,2-diacyl-sn-glycero-3-phospho-(1D-myo-inositol)(in) = a 1,2-diacyl-sn-glycero-3-phospho-(1D-myo-inositol)(out). It catalyses the reaction a 1,2-diacyl-sn-glycero-3-phosphocholine(in) = a 1,2-diacyl-sn-glycero-3-phosphocholine(out). The enzyme catalyses a 1,2-diacyl-sn-glycero-3-phosphoethanolamine(in) = a 1,2-diacyl-sn-glycero-3-phosphoethanolamine(out). In terms of biological role, scramblase that mediates the translocation of glucosaminylphosphatidylinositol (alpha-D-GlcN-(1-6)-(1,2-diacyl-sn-glycero-3-phospho)-1D-myo-inositol, GlcN-PI) across the endoplasmic reticulum (ER) membrane, from the cytosolic leaflet to the luminal leaflet of the ER membrane, where it participates in the biosynthesis of glycosylphosphatidylinositol (GPI). GPI is a lipid glycoconjugate involved in post-translational modification of proteins. Can also translocate 1,2-diacyl-sn-glycero-3-phospho-(1D-myo-inositol) (phosphatidylinositol or PI), as well as several other phospholipids (1,2-diacyl-sn-glycero-3-phosphocholine, 1,2-diacyl-sn-glycero-3-phosphoethanolamine), and N-acetylglucosaminylphosphatidylinositol (GlcNAc-PI) in vitro. The sequence is that of Lipid scramblase CLPTM1L (CLPTM1L) from Bos taurus (Bovine).